The chain runs to 326 residues: ELMO domain-containing protein 1 (326 aa).

An ELMO domain is found at 133-306; the sequence is QHEEMLLKLW…KFRKRIIKQL (174 aa).

In terms of biological role, acts as a GTPase-activating protein (GAP) toward guanine nucleotide exchange factors like ARL2, ARL3, ARF1 and ARF6, but not for GTPases outside the Arf family. This Pongo abelii (Sumatran orangutan) protein is ELMO domain-containing protein 1 (ELMOD1).